Here is a 147-residue protein sequence, read N- to C-terminus: Hordoindoline-B2 (147 aa).

A signal peptide spans 1-19 (MKTLFLLALLALVASTTSA). Residues 20-28 (QYSVGGGYN) constitute a propeptide that is removed on maturation.

In terms of processing, five disulfide bonds are present. As to expression, found in endosperm and aleurone layer of developing kernels, but not in the embryo.

The protein resides in the membrane. Its subcellular location is the secreted. It localises to the extracellular space. In terms of biological role, acts as a membranotoxin, probably through its antibacterial and antifungal activities, contributing to the defense mechanism of the plant against predators. Forms monovalent cation-selective ion channels in membranes. Contributes to grain texture and hardness. This is Hordoindoline-B2 (HINB-2) from Hordeum vulgare (Barley).